A 273-amino-acid chain; its full sequence is NAD(P)H-hydrate epimerase (273 aa).

One can recognise a YjeF N-terminal domain in the interval 18 to 257 (ALKLDEDLIN…LLAMEYDVQE (240 aa)). 71–75 (NNGGD) is a (6S)-NADPHX binding site. K(+)-binding residues include asparagine 72 and aspartate 146. Residues 150–157 (GFSFHGGP), tyrosine 162, and aspartate 188 contribute to the (6S)-NADPHX site. A K(+)-binding site is contributed by serine 191.

Belongs to the NnrE/AIBP family. The cofactor is K(+).

It catalyses the reaction (6R)-NADHX = (6S)-NADHX. It carries out the reaction (6R)-NADPHX = (6S)-NADPHX. Functionally, catalyzes the epimerization of the S- and R-forms of NAD(P)HX, a damaged form of NAD(P)H that is a result of enzymatic or heat-dependent hydration. This is a prerequisite for the S-specific NAD(P)H-hydrate dehydratase to allow the repair of both epimers of NAD(P)HX. The chain is NAD(P)H-hydrate epimerase from Giardia intestinalis (strain ATCC 50803 / WB clone C6) (Giardia lamblia).